Reading from the N-terminus, the 391-residue chain is uncharacterized protein (391 aa).

Residues S118–P149 show a composition bias toward low complexity. 4 disordered regions span residues S118–P162, Q184–N258, N272–N327, and L337–N356. Over residues Q150 to P162 the composition is skewed to basic residues. Low complexity predominate over residues N186–N211. Over residues D212–T223 the composition is skewed to polar residues. Residues N244–P256 show a composition bias toward low complexity.

This is an uncharacterized protein from Dictyostelium discoideum (Social amoeba).